Here is a 61-residue protein sequence, read N- to C-terminus: Protein translocase subunit SecE (61 aa).

Residues 1–34 lie on the Cytoplasmic side of the membrane; sequence MAELQERIRHFWKESRRAFLVTKKPNWATYKRAA. A helical membrane pass occupies residues 35–55; sequence KITGLGIILIGLIGMLIRIVG. Over 56-61 the chain is Extracellular; that stretch reads ILILGG.

Belongs to the SecE/SEC61-gamma family. As to quaternary structure, component of the Sec protein translocase complex. Heterotrimer consisting of alpha (SecY), beta (SecG) and gamma (SecE) subunits. The heterotrimers can form oligomers, although 1 heterotrimer is thought to be able to translocate proteins. Interacts with the ribosome. May interact with SecDF, and other proteins may be involved.

Its subcellular location is the cell membrane. Functionally, essential subunit of the protein translocation channel SecYEG. Clamps together the 2 halves of SecY. May contact the channel plug during translocation. In Pyrococcus furiosus (strain ATCC 43587 / DSM 3638 / JCM 8422 / Vc1), this protein is Protein translocase subunit SecE.